Reading from the N-terminus, the 62-residue chain is Conotoxin Pn-B02 (62 aa).

The N-terminal stretch at 1–19 is a signal peptide; that stretch reads MRCLPVFIILLLLIASAPS. A propeptide spanning residues 20 to 49 is cleaved from the precursor; it reads FDALPKTEDNVPLSSFHDNLKRTRRIHLNI. Alanine 61 bears the Alanine amide mark.

Belongs to the conotoxin T superfamily. In terms of processing, contains 2 disulfide bonds that can be either 'C1-C3, C2-C4' or 'C1-C4, C2-C3', since these disulfide connectivities have been observed for conotoxins with cysteine framework V (for examples, see AC P0DQQ7 and AC P81755). As to expression, expressed by the venom duct.

The protein localises to the secreted. The sequence is that of Conotoxin Pn-B02 from Conus pennaceus (Feathered cone).